We begin with the raw amino-acid sequence, 130 residues long: Small ribosomal subunit protein uS8 (130 aa).

The protein belongs to the universal ribosomal protein uS8 family. Part of the 30S ribosomal subunit. Contacts proteins S5 and S12.

In terms of biological role, one of the primary rRNA binding proteins, it binds directly to 16S rRNA central domain where it helps coordinate assembly of the platform of the 30S subunit. The protein is Small ribosomal subunit protein uS8 of Klebsiella pneumoniae (strain 342).